Consider the following 431-residue polypeptide: MVRLEKNDPLMLARQLPIKSVALILAGGRGTRLKDLTIKRAKPAVHFGGKFRIIDFALSNCINSGIRRIGVITQYQSHTLVQHIQRGWSFFSEEMNEFVDLLPAQQRVHGENWYRGTADAVTQNLDIISRYKAEYVVILAGDHIYKQDYSRMLIDHVEKGARCTVACMPVPIEEASAFGVMAVDENEKIIEFVEKPANPPAMPTDPTKSLASMGIYVFDAAYLYELLEEDDRNENSSHDFGKDIIPKITEAGMAYAHPFPLSCVQSDPNAEPYWRDVGTLEAYWKANLDLASVTPELDMYDQNWPIRTHMESLPPAKFVQDRSGSHGMTLNSLVSGGCIISGSVVVQSVLFPRVRVNSFCNIDSAVLLPDVWVGRSCRLRRCVIDRACVIPEGMVIGENAEEDARRFYRSEEGIVLVTRDMLRKLGHKQER.

Lys39 contacts beta-D-fructose 1,6-bisphosphate. Positions 40, 46, and 52 each coordinate AMP. Tyr114 contributes to the alpha-D-glucose 1-phosphate binding site. Arg130 is a binding site for AMP. Residues Gly179, 194–195 (EK), and Ser212 contribute to the alpha-D-glucose 1-phosphate site. AMP is bound at residue Arg386. Position 429 to 431 (429 to 431 (QER)) interacts with beta-D-fructose 1,6-bisphosphate.

It belongs to the bacterial/plant glucose-1-phosphate adenylyltransferase family. Homotetramer.

It carries out the reaction alpha-D-glucose 1-phosphate + ATP + H(+) = ADP-alpha-D-glucose + diphosphate. Its pathway is glycan biosynthesis; glycogen biosynthesis. Allosterically activated by fructose-1,6-bisphosphate (F16BP) and inhibited by AMP. Its function is as follows. Involved in the biosynthesis of ADP-glucose, a building block required for the elongation reactions to produce glycogen. Catalyzes the reaction between ATP and alpha-D-glucose 1-phosphate (G1P) to produce pyrophosphate and ADP-Glc. The polypeptide is Glucose-1-phosphate adenylyltransferase (Klebsiella pneumoniae subsp. pneumoniae (strain ATCC 700721 / MGH 78578)).